The primary structure comprises 465 residues: 23S rRNA (uracil(1939)-C(5))-methyltransferase RlmD (465 aa).

Positions 1-24 are disordered; that stretch reads MSEAVPLSTRRASSAGDAPGRAPV. The 65-residue stretch at 16–80 folds into the TRAM domain; the sequence is GDAPGRAPVL…PTYEQAQVVD (65 aa). [4Fe-4S] cluster-binding residues include Cys-93, Cys-99, Cys-102, and Cys-181. S-adenosyl-L-methionine is bound by residues Gln-289, Phe-318, Asn-323, Glu-339, Asn-367, and Asp-388. Residue Cys-421 is the Nucleophile of the active site.

This sequence belongs to the class I-like SAM-binding methyltransferase superfamily. RNA M5U methyltransferase family. RlmD subfamily.

The enzyme catalyses uridine(1939) in 23S rRNA + S-adenosyl-L-methionine = 5-methyluridine(1939) in 23S rRNA + S-adenosyl-L-homocysteine + H(+). Functionally, catalyzes the formation of 5-methyl-uridine at position 1939 (m5U1939) in 23S rRNA. The polypeptide is 23S rRNA (uracil(1939)-C(5))-methyltransferase RlmD (Burkholderia mallei (strain ATCC 23344)).